We begin with the raw amino-acid sequence, 797 residues long: Probable DNA polymerase (797 aa).

Belongs to the DNA polymerase type-B family.

It is found in the mitochondrion. It catalyses the reaction DNA(n) + a 2'-deoxyribonucleoside 5'-triphosphate = DNA(n+1) + diphosphate. This chain is Probable DNA polymerase, found in Agaricus bitorquis (Pavement mushroom).